We begin with the raw amino-acid sequence, 370 residues long: Putative glutamate--cysteine ligase 2 (370 aa).

It belongs to the glutamate--cysteine ligase type 2 family. YbdK subfamily.

The catalysed reaction is L-cysteine + L-glutamate + ATP = gamma-L-glutamyl-L-cysteine + ADP + phosphate + H(+). Functionally, ATP-dependent carboxylate-amine ligase which exhibits weak glutamate--cysteine ligase activity. This is Putative glutamate--cysteine ligase 2 from Methylibium petroleiphilum (strain ATCC BAA-1232 / LMG 22953 / PM1).